An 845-amino-acid polypeptide reads, in one-letter code: DNA replication licensing factor MCM7 (845 aa).

The region spanning Val-410–Thr-617 is the MCM domain. Tyr-423, Gly-463, Ala-465, Lys-466, Ser-467, Asn-568, Arg-593, and Arg-687 together coordinate ATP. The Arginine finger signature appears at Ser-592 to Asp-595. Thr-811 is modified (phosphothreonine). The interval Asp-812–Ala-845 is disordered. Ser-819 is subject to Phosphoserine. The segment covering Pro-825–Asp-837 has biased composition (polar residues). Ser-838 bears the Phosphoserine mark.

Belongs to the MCM family. In terms of assembly, component of the MCM2-7 complex. The complex forms a toroidal hexameric ring with the proposed subunit order MCM2-MCM6-MCM4-MCM7-MCM3-MCM5; loaded onto DNA, forms a head-head double hexamer. Interacts with CSM1 and MCM10.

The protein resides in the cytoplasm. It localises to the nucleus. It catalyses the reaction ATP + H2O = ADP + phosphate + H(+). Acts as a component of the MCM2-7 complex (MCM complex) which is the putative replicative helicase essential for 'once per cell cycle' DNA replication initiation and elongation in eukaryotic cells. Core component of CDC45-MCM-GINS (CMG) helicase, the molecular machine that unwinds template DNA during replication, and around which the replisome is built. The active ATPase sites in the MCM2-7 ring are formed through the interaction surfaces of two neighboring subunits such that a critical structure of a conserved arginine finger motif is provided in trans relative to the ATP-binding site of the Walker A box of the adjacent subunit. The six ATPase active sites, however, are likely to contribute differentially to the complex helicase activity. Once loaded onto DNA, double hexamers can slide on dsDNA in the absence of ATPase activity. The sequence is that of DNA replication licensing factor MCM7 (MCM7) from Saccharomyces cerevisiae (strain ATCC 204508 / S288c) (Baker's yeast).